The sequence spans 183 residues: Large ribosomal subunit protein uL13m (183 aa).

This sequence belongs to the universal ribosomal protein uL13 family. Component of the mitochondrial large ribosomal subunit (mt-LSU). Mature N.crassa 74S mitochondrial ribosomes consist of a small (37S) and a large (54S) subunit. The 37S small subunit contains a 16S ribosomal RNA (16S mt-rRNA) and 32 different proteins. The 54S large subunit contains a 23S rRNA (23S mt-rRNA) and 42 different proteins.

The protein localises to the mitochondrion. Functionally, component of the mitochondrial ribosome (mitoribosome), a dedicated translation machinery responsible for the synthesis of mitochondrial genome-encoded proteins, including at least some of the essential transmembrane subunits of the mitochondrial respiratory chain. The mitoribosomes are attached to the mitochondrial inner membrane and translation products are cotranslationally integrated into the membrane. The protein is Large ribosomal subunit protein uL13m (mrpl23) of Neurospora crassa (strain ATCC 24698 / 74-OR23-1A / CBS 708.71 / DSM 1257 / FGSC 987).